A 158-amino-acid polypeptide reads, in one-letter code: Protein BTG2 (158 aa).

The residue at position 147 (serine 147) is a Phosphoserine; by MAPK1 and MAPK3. The residue at position 149 (serine 149) is a Phosphoserine; by MAPK14.

Belongs to the BTG family. In terms of assembly, interacts with PRKCABP. Interacts with CNOT7 and CNOT8; indicative for an association with the CCR4-NOT complex. Interacts with PIN1, inducing mitochondrial depolarization. Post-translationally, phosphorylated at Ser-147 by MAPK1/ERK2 and MAPK3/ERK1, and at Ser-149 by MAPK14, leading to PIN1-binding and mitochondrial depolarization.

In terms of biological role, anti-proliferative protein; the function is mediated by association with deadenylase subunits of the CCR4-NOT complex. Activates mRNA deadenylation in a CNOT6 and CNOT7-dependent manner. In vitro can inhibit deadenylase activity of CNOT7 and CNOT8. Involved in cell cycle regulation. Could be involved in the growth arrest and differentiation of the neuronal precursors. Modulates transcription regulation mediated by ESR1. Involved in mitochondrial depolarization and neurite outgrowth. The polypeptide is Protein BTG2 (BTG2) (Homo sapiens (Human)).